Here is a 401-residue protein sequence, read N- to C-terminus: Chalcone synthase 5 (401 aa).

The active site involves cysteine 168.

The protein belongs to the thiolase-like superfamily. Chalcone/stilbene synthases family.

It carries out the reaction (E)-4-coumaroyl-CoA + 3 malonyl-CoA + 3 H(+) = 2',4,4',6'-tetrahydroxychalcone + 3 CO2 + 4 CoA. The protein operates within secondary metabolite biosynthesis; flavonoid biosynthesis. Its function is as follows. The primary product of this enzyme is 4,2',4',6'-tetrahydroxychalcone (also termed naringenin-chalcone or chalcone) which can under specific conditions spontaneously isomerize into naringenin. This is Chalcone synthase 5 (CHS5) from Sorghum bicolor (Sorghum).